The primary structure comprises 200 residues: Holliday junction branch migration complex subunit RuvA (200 aa).

Residues 1 to 65 (MYEYIKGTLT…ETEHVLYGFS (65 aa)) are domain I. A domain II region spans residues 66–144 (SRAERECFRL…TLMPLYLEEP (79 aa)). The segment at 145-149 (VVPSS) is flexible linker. The domain III stretch occupies residues 150–200 (TANSSFKEGIGALMNLGFSRLAADRMMTEAVKELSEEASVAELLPIALRKS).

The protein belongs to the RuvA family. In terms of assembly, homotetramer. Forms an RuvA(8)-RuvB(12)-Holliday junction (HJ) complex. HJ DNA is sandwiched between 2 RuvA tetramers; dsDNA enters through RuvA and exits via RuvB. An RuvB hexamer assembles on each DNA strand where it exits the tetramer. Each RuvB hexamer is contacted by two RuvA subunits (via domain III) on 2 adjacent RuvB subunits; this complex drives branch migration. In the full resolvosome a probable DNA-RuvA(4)-RuvB(12)-RuvC(2) complex forms which resolves the HJ.

It localises to the cytoplasm. Its function is as follows. The RuvA-RuvB-RuvC complex processes Holliday junction (HJ) DNA during genetic recombination and DNA repair, while the RuvA-RuvB complex plays an important role in the rescue of blocked DNA replication forks via replication fork reversal (RFR). RuvA specifically binds to HJ cruciform DNA, conferring on it an open structure. The RuvB hexamer acts as an ATP-dependent pump, pulling dsDNA into and through the RuvAB complex. HJ branch migration allows RuvC to scan DNA until it finds its consensus sequence, where it cleaves and resolves the cruciform DNA. This chain is Holliday junction branch migration complex subunit RuvA, found in Chlamydia trachomatis serovar D (strain ATCC VR-885 / DSM 19411 / UW-3/Cx).